Reading from the N-terminus, the 471-residue chain is 6-phosphofructo-2-kinase/fructose-2,6-bisphosphatase 1 (471 aa).

Ser-2 carries the N-acetylserine modification. Residues 2-250 (SQEMGELTQT…VYYLMNIHVT (249 aa)) form a 6-phosphofructo-2-kinase region. The residue at position 33 (Ser-33) is a Phosphoserine; by PKA. 49-57 (GLPARGKTY) provides a ligand contact to ATP. Positions 82 and 105 each coordinate beta-D-fructose 6-phosphate. Residue Asp-131 is part of the active site. Beta-D-fructose 6-phosphate is bound by residues Thr-133 and Arg-139. Ser-141 is subject to Phosphoserine. Cys-161 is a catalytic residue. ATP is bound at residue 170–175 (NIRQVK). Beta-D-fructose 6-phosphate contacts are provided by Lys-175, Arg-196, and Tyr-200. The segment at 251–471 (PRSIYLCRHG…EALDTVPAHY (221 aa)) is fructose-2,6-bisphosphatase. Arg-258 is a beta-D-fructose 2,6-bisphosphate binding site. His-259 acts as the Tele-phosphohistidine intermediate in catalysis. Beta-D-fructose 2,6-bisphosphate is bound by residues Asn-265, Gly-271, and Arg-308. Glu-328 serves as the catalytic Proton donor/acceptor. 6 residues coordinate beta-D-fructose 2,6-bisphosphate: Tyr-339, Arg-353, Lys-357, Tyr-368, Gln-394, and Arg-398. Residue 350–353 (FALR) coordinates ATP. ATP is bound by residues 394–398 (QAVMR) and Tyr-430.

In the C-terminal section; belongs to the phosphoglycerate mutase family. Homodimer. As to expression, liver.

It carries out the reaction beta-D-fructose 2,6-bisphosphate + H2O = beta-D-fructose 6-phosphate + phosphate. The catalysed reaction is beta-D-fructose 6-phosphate + ATP = beta-D-fructose 2,6-bisphosphate + ADP + H(+). With respect to regulation, phosphorylation at Ser-33 inhibits the kinase and activates the bisphosphatase. Synthesis and degradation of fructose 2,6-bisphosphate. The chain is 6-phosphofructo-2-kinase/fructose-2,6-bisphosphatase 1 from Bos taurus (Bovine).